A 635-amino-acid polypeptide reads, in one-letter code: Protein OPG056 (635 aa).

Belongs to the orthopoxvirus OPG056 family. As to quaternary structure, interacts with protein OPG164/A36. Interacts with protein OPG064/E2.

It localises to the virion membrane. It is found in the host endosome. Its function is as follows. Plays a role in intracellular enveloped virus (IEV) transport to the cell surface through microtubule transport. Together with protein OPG064/E2, forms a complex that interacts with host KLC2 (kinesin light chain isoform 2) to engage the kinesin-1 complex and thereby promote IEV trafficking. The sequence is that of Protein OPG056 (OPG056) from Vaccinia virus (strain Western Reserve) (VACV).